The chain runs to 314 residues: Glutamyl-Q tRNA(Asp) synthetase (314 aa).

L-glutamate-binding positions include 14–18 and E50; that span reads RFAPS. The 'HIGH' region motif lies at 17 to 27; it reads PSPTGPLHVGS. 4 residues coordinate Zn(2+): C106, C108, Y129, and C133. The L-glutamate site is built by Y187 and R205. The short motif at 243 to 247 is the 'KMSKS' region element; it reads KLSKR. K246 is a binding site for ATP.

Belongs to the class-I aminoacyl-tRNA synthetase family. GluQ subfamily. Requires Zn(2+) as cofactor.

In terms of biological role, catalyzes the tRNA-independent activation of glutamate in presence of ATP and the subsequent transfer of glutamate onto a tRNA(Asp). Glutamate is transferred on the 2-amino-5-(4,5-dihydroxy-2-cyclopenten-1-yl) moiety of the queuosine in the wobble position of the QUC anticodon. The polypeptide is Glutamyl-Q tRNA(Asp) synthetase (Geobacter sulfurreducens (strain ATCC 51573 / DSM 12127 / PCA)).